Consider the following 414-residue polypeptide: Putative competence-damage inducible protein (414 aa).

Belongs to the CinA family.

The chain is Putative competence-damage inducible protein from Geobacillus kaustophilus (strain HTA426).